Consider the following 346-residue polypeptide: MKKAAIIGGTGYGAIELIRLLDSHPYIELAKIISQSQHGELLDETYPHLATYVTQPMQELHIQQLIEEIDIVFLATPAGVAKEIAASFLDSSIQCIDLSGDLRLSSSDYEMWYQKKPASEALLEKTAYGLTEVFQEKIKQANIISNPGCFPTAALLGLIPMLENNIIESKGIMIDGKTGISGAGKNSSAKTHFSTTNENVTPYKIGTHQHIPEIEKYLSQHVEESSVRVTLTTHLIPMTRGLMCTMYAPLQQDIDTADVIDLYKHYYEQSSFIRIRKQGEYPSTKDVTGSNYCDIGAYVDKRTNQLIISSAIDNLVKGAAGQAIQNINVMNGWDEKTGLSFLPVYP.

Cys-149 is an active-site residue.

It belongs to the NAGSA dehydrogenase family. Type 1 subfamily.

Its subcellular location is the cytoplasm. The enzyme catalyses N-acetyl-L-glutamate 5-semialdehyde + phosphate + NADP(+) = N-acetyl-L-glutamyl 5-phosphate + NADPH + H(+). The protein operates within amino-acid biosynthesis; L-arginine biosynthesis; N(2)-acetyl-L-ornithine from L-glutamate: step 3/4. Catalyzes the NADPH-dependent reduction of N-acetyl-5-glutamyl phosphate to yield N-acetyl-L-glutamate 5-semialdehyde. The polypeptide is N-acetyl-gamma-glutamyl-phosphate reductase (Oceanobacillus iheyensis (strain DSM 14371 / CIP 107618 / JCM 11309 / KCTC 3954 / HTE831)).